The sequence spans 337 residues: WRKY transcription factor 23 (337 aa).

Residues 100-160 (INPPATPNSS…KNNQKRQREA (61 aa)) are disordered. The segment covering 106–118 (PNSSSISSASSEA) has biased composition (low complexity). Over residues 142 to 155 (HTKKQLKAKKNNQK) the composition is skewed to basic residues. The WRKY DNA-binding region spans 168-233 (SEVDHLEDGY…YEGQHTHISP (66 aa)).

The protein belongs to the WRKY group II-c family.

It localises to the nucleus. Its function is as follows. Transcription factor. Interacts specifically with the W box (5'-(T)TGAC[CT]-3'), a frequently occurring elicitor-responsive cis-acting element. This chain is WRKY transcription factor 23 (WRKY23), found in Arabidopsis thaliana (Mouse-ear cress).